Here is a 378-residue protein sequence, read N- to C-terminus: UPF0754 membrane protein BCE_0952 (378 aa).

Helical transmembrane passes span 1-21 (MNIWLSMLTTTGLGAIIGGFT) and 357-377 (YLGALLGGMIGIVQGLLLLFL).

The protein belongs to the UPF0754 family.

The protein localises to the cell membrane. This is UPF0754 membrane protein BCE_0952 from Bacillus cereus (strain ATCC 10987 / NRS 248).